The primary structure comprises 223 residues: PKHD-type hydroxylase syc1482_d (223 aa).

Residues 78-176 (RVHSLLFSRY…RFACVGWVQS (99 aa)) enclose the Fe2OG dioxygenase domain. Positions 96, 98, and 157 each coordinate Fe cation. Arg167 serves as a coordination point for 2-oxoglutarate.

Fe(2+) serves as cofactor. The cofactor is L-ascorbate.

In Synechococcus sp. (strain ATCC 27144 / PCC 6301 / SAUG 1402/1) (Anacystis nidulans), this protein is PKHD-type hydroxylase syc1482_d.